The following is a 282-amino-acid chain: HTH-type transcriptional activator RhaR (282 aa).

The region spanning 179–277 is the HTH araC/xylS-type domain; it reads DKLITALANS…GMTPSQWRHL (99 aa). DNA-binding regions (H-T-H motif) lie at residues 196 to 217 and 244 to 267; these read DAFC…RAQT and VSEI…TRET.

Binds DNA as a dimer.

The protein localises to the cytoplasm. Functionally, activates expression of the rhaSR operon in response to L-rhamnose. This chain is HTH-type transcriptional activator RhaR, found in Salmonella typhi.